The primary structure comprises 396 residues: Phosphoglycerate kinase (396 aa).

Residues 23–25 (DFN), Arg38, 61–64 (HMGK), Arg122, and Arg155 each bind substrate. Residues Lys206, Gly296, Glu327, and 353-356 (GGDS) contribute to the ATP site.

The protein belongs to the phosphoglycerate kinase family. As to quaternary structure, monomer.

It is found in the cytoplasm. The catalysed reaction is (2R)-3-phosphoglycerate + ATP = (2R)-3-phospho-glyceroyl phosphate + ADP. Its pathway is carbohydrate degradation; glycolysis; pyruvate from D-glyceraldehyde 3-phosphate: step 2/5. The chain is Phosphoglycerate kinase from Clostridium botulinum (strain Alaska E43 / Type E3).